Here is a 555-residue protein sequence, read N- to C-terminus: Glypican-6 (555 aa).

The first 23 residues, 1–23 (MPSWIGAVILPLLGLLLSLPAGA), serve as a signal peptide directing secretion. The segment covering 348–357 (PALRSARSAP) has biased composition (low complexity). A disordered region spans residues 348–376 (PALRSARSAPENFNTRFRPYNPEERPTTA). S529 is lipidated: GPI-anchor amidated serine. Residues 530–555 (SAAQRGHSLLSWSLTCIVLALQRLCR) constitute a propeptide, removed in mature form.

It belongs to the glypican family.

Its subcellular location is the cell membrane. It is found in the secreted. It localises to the extracellular space. In terms of biological role, cell surface proteoglycan that bears heparan sulfate. Putative cell surface coreceptor for growth factors, extracellular matrix proteins, proteases and anti-proteases. Enhances migration and invasion of cancer cells through WNT5A signaling. The chain is Glypican-6 (GPC6) from Pongo abelii (Sumatran orangutan).